Consider the following 213-residue polypeptide: Putative 3-methyladenine DNA glycosylase (213 aa).

Belongs to the DNA glycosylase MPG family.

This is Putative 3-methyladenine DNA glycosylase from Leifsonia xyli subsp. xyli (strain CTCB07).